Reading from the N-terminus, the 303-residue chain is MTASNKQAVKAYLLNLQDKICQVLAAVDGKETFVEDSWQRPEGGGGRSRVLTNGAVIEKGGVNFSHVHGSSMPASATAHRPELAGRSFEAMGVSLVIHPNNPHVPTSHANVRFFIAEKEGAEPVWWFGGGYDLTPYYGNDEDCRHWHNTAKAACAPFGEDKYPRYKKWCDEYFYLKHRDEPRGVGGLFFDDLNELGFDQSFAFMQAVGDSYTQAYVPIVERRKDEPYNQAQRDFQLYRRGRYVEFNLVYDRGTLFGLQTGGRTESILMSLPPLVRWEYDWQPQPNTPEARLYEHYLQPQDWAE.

Residue Ser94 participates in substrate binding. A divalent metal cation contacts are provided by His98 and His108. His108 (proton donor) is an active-site residue. 110-112 (NVR) provides a ligand contact to substrate. A divalent metal cation is bound by residues His147 and His177. Residues 242–277 (YVEFNLVYDRGTLFGLQTGGRTESILMSLPPLVRWE) form an important for dimerization region. A substrate-binding site is contributed by 260–262 (GGR).

It belongs to the aerobic coproporphyrinogen-III oxidase family. Homodimer. It depends on a divalent metal cation as a cofactor.

It is found in the cytoplasm. It carries out the reaction coproporphyrinogen III + O2 + 2 H(+) = protoporphyrinogen IX + 2 CO2 + 2 H2O. The protein operates within porphyrin-containing compound metabolism; protoporphyrin-IX biosynthesis; protoporphyrinogen-IX from coproporphyrinogen-III (O2 route): step 1/1. In terms of biological role, involved in the heme biosynthesis. Catalyzes the aerobic oxidative decarboxylation of propionate groups of rings A and B of coproporphyrinogen-III to yield the vinyl groups in protoporphyrinogen-IX. The chain is Oxygen-dependent coproporphyrinogen-III oxidase from Saccharophagus degradans (strain 2-40 / ATCC 43961 / DSM 17024).